The following is a 218-amino-acid chain: MADYSSLTVVQLKDLLTKRNLSVGGLKNELVQRLIKDDEESKGESEVSPQEQNQEQGSEPAAIEEPASQNITEKKEVSSEPKETNEPKEENKDVQKPSDGPSATASENEQAAASTAAPALSPEEIKAKALDLLNKKLHRANKFGQDQADIDSLQRQINRVEKFGVDLNSKLAEELGLVSRKNEPESGNNGKFKNRNKNANNRSRVSKNRRGNRSGYRR.

An SAP domain is found at 4 to 38 (YSSLTVVQLKDLLTKRNLSVGGLKNELVQRLIKDD). S22 carries the post-translational modification Phosphoserine. Disordered stretches follow at residues 37 to 123 (DDEE…LSPE) and 177 to 218 (LVSR…GYRR). Residues 47 to 57 (VSPQEQNQEQG) show a composition bias toward polar residues. 2 positions are modified to phosphoserine: S58 and S68. Residues 72 to 96 (TEKKEVSSEPKETNEPKEENKDVQK) are compositionally biased toward basic and acidic residues. Low complexity-rich tracts occupy residues 102–122 (SATA…ALSP) and 186–203 (SGNN…NNRS). The span at 204-218 (RVSKNRRGNRSGYRR) shows a compositional bias: basic residues.

It belongs to the SAP domain-containing ribonucleoprotein family. In terms of assembly, interacts with SUB2 in the presence of RNA; this interaction facilitates RNA binding of SUB2.

Its function is as follows. Facilitates RNA binding of SUB2 and likely plays a role in mRNA export. Suppressor of the transcriptional defect of HPR1 by overexpression. This Saccharomyces cerevisiae (strain ATCC 204508 / S288c) (Baker's yeast) protein is Protein THO1 (THO1).